We begin with the raw amino-acid sequence, 348 residues long: Protein DMR6-LIKE OXYGENASE 2 (348 aa).

Residues 194 to 294 (KHGQHMAINY…RISIPTFYCP (101 aa)) enclose the Fe2OG dioxygenase domain. Fe cation-binding residues include H219, D221, and H275. R285 contacts 2-oxoglutarate.

The protein belongs to the iron/ascorbate-dependent oxidoreductase family. Fe(2+) is required as a cofactor.

It catalyses the reaction salicylate + NADH + O2 + H(+) = 2,3-dihydroxybenzoate + NAD(+) + H2O. Functionally, converts salicylic acid (SA) to 2,3-dihydroxybenzoic acid (2,3-DHBA). Negative regulator of defense against Hyaloperonospora arabidopsidis. Its function is as follows. (Microbial infection) Confers susceptibility to the downy mildew pathogen Hyaloperonospora arabidopsidis. The chain is Protein DMR6-LIKE OXYGENASE 2 from Arabidopsis thaliana (Mouse-ear cress).